The sequence spans 941 residues: HMG box transcription factor BBX (941 aa).

A compositionally biased stretch (basic and acidic residues) spans 1 to 18 (MKGSNRNKDHSAEGEGVG). Disordered stretches follow at residues 1–21 (MKGSNRNKDHSAEGEGVGKRP), 39–80 (FSEE…EQRA), 157–200 (VKSP…FGMA), and 221–242 (TPEVSSGTCRPDVSESPELRQK). 2 stretches are compositionally biased toward acidic residues: residues 39–52 (FSEEEEEEDEEEDI) and 63–75 (LEQDVGETEDDES). The segment at residues 80–148 (ARRPMNAFLL…AFMKANPGYK (69 aa)) is a DNA-binding region (HMG box). Positions 177–191 (SSRDLPSPKKAKTEE) are enriched in basic and acidic residues. At Ser243 the chain carries Phosphoserine. Positions 326 to 370 (GRIKELEKGKEEKEIKMEKTDETRLQKEAEFEKSAKENLRDSKEL) form a coiled coil. Lys385 participates in a covalent cross-link: Glycyl lysine isopeptide (Lys-Gly) (interchain with G-Cter in SUMO2). Residues 438–482 (IEDPAALNKPEKLKKKKKKSKMDRHGNDKSTPKKTCKKRQSSESD) form a disordered region. A compositionally biased stretch (basic residues) spans 449 to 459 (KLKKKKKKSKM). Residues Ser478 and Ser485 each carry the phosphoserine modification. Composition is skewed to basic and acidic residues over residues 499 to 508 (GIEKLGDTPR) and 536 to 552 (KKMSKEKSSDTTKESRP). 2 disordered regions span residues 499 to 600 (GIEK…SDCH) and 635 to 677 (NVDR…KKTK). Lys573 is covalently cross-linked (Glycyl lysine isopeptide (Lys-Gly) (interchain with G-Cter in SUMO2)). Low complexity predominate over residues 661 to 670 (TFSQSGTSGS). Lys696 participates in a covalent cross-link: Glycyl lysine isopeptide (Lys-Gly) (interchain with G-Cter in SUMO2). Ser704 carries the post-translational modification Phosphoserine. Disordered stretches follow at residues 714-771 (PVPR…DKWS), 803-888 (IPSI…SSTP), and 912-941 (HRGQRSTPLTHDGQPKEMPQAPVLISCADQ). A compositionally biased stretch (polar residues) spans 723–742 (GNVSSEPTKTSKGPFQSQKK). Residues 743-757 (NLFHKIVSKYKHKKE) show a composition bias toward basic residues. Residues 758-771 (KPNVPEKGSGDKWS) are compositionally biased toward basic and acidic residues. Over residues 805 to 817 (SIFNTPEPTTTQE) the composition is skewed to polar residues. Phosphoserine is present on Ser822. Over residues 823–834 (QKRKARKTKITH) the composition is skewed to basic residues. Ser844 carries the post-translational modification Phosphoserine. The span at 866–882 (TETDCNDKCSHNTEVGE) shows a compositional bias: basic and acidic residues.

Its subcellular location is the nucleus. Functionally, transcription factor that is necessary for cell cycle progression from G1 to S phase. This Homo sapiens (Human) protein is HMG box transcription factor BBX (BBX).